We begin with the raw amino-acid sequence, 477 residues long: Homeobox protein Meis2 (477 aa).

Positions 71–191 (DALKRDKDAI…KMPIDLVIDE (121 aa)) are required for interaction with PBX1. An MEIS N-terminal domain is found at 110-193 (GGDVCSSDSF…PIDLVIDERD (84 aa)). Positions 193-203 (DGSSKSDHEEL) are enriched in basic and acidic residues. Positions 193-283 (DGSSKSDHEE…KKRQKKRGIF (91 aa)) are disordered. 2 stretches are compositionally biased toward polar residues: residues 204–217 (SGSS…NPSS) and 239–251 (GHAS…SSEQ). Residues 276–338 (RQKKRGIFPK…NARRRIVQPM (63 aa)) constitute a DNA-binding region (homeobox; TALE-type). An interaction with DNA region spans residues 299–333 (LTHPYPSEEQKKQLAQDTGLTILQVNNWFINARRR). The tract at residues 340 to 477 (DQSNRAGFLL…GGQVMDIHAQ (138 aa)) is transcriptional activation domain.

The protein belongs to the TALE/MEIS homeobox family. Monomer and homodimer. Heterodimer with HOXB13. Isoform 2 interacts with TLX1. Isoform 3 interacts with HOXA13 and PBX1 isoform PBX1b. Isoform 4 interacts with SP1, SP3 and KLF4. Isoform 4 and isoform 5 interact with PBX1 isoform PBX1a; the interaction partially relieves MEIS2 autoinhibition. Isoform 3 also known as MEIS2b is part of a PDX1:PBX1b:Meis2B complex; Meis2B is recruited by PBX1b and can be replaced by isoform 4 in a small fraction of complexes. Can form trimeric complexes including HOXB8 and PBX2 or PBX3. In terms of tissue distribution, expressed in various tissues. Expressed at high level in the lymphoid organs of hematopoietic tissues. Also expressed in some regions of the brain, such as the putamen.

The protein resides in the nucleus. Its subcellular location is the cytoplasm. The protein localises to the perinuclear region. In terms of biological role, involved in transcriptional regulation. Binds to HOX or PBX proteins to form dimers, or to a DNA-bound dimer of PBX and HOX proteins and thought to have a role in stabilization of the homeoprotein-DNA complex. Isoform 3 is required for the activity of a PDX1:PBX1b:MEIS2b complex in pancreatic acinar cells involved in the transcriptional activation of the ELA1 enhancer; the complex binds to the enhancer B element and cooperates with the transcription factor 1 complex (PTF1) bound to the enhancer A element; MEIS2 is not involved in complex DNA-binding. Probably in complex with PBX1, is involved in transcriptional regulation by KLF4. Isoform 3 and isoform 4 can bind to a EPHA8 promoter sequence containing the DNA motif 5'-CGGTCA-3'; in cooperation with a PBX protein (such as PBX2) is proposed to be involved in the transcriptional activation of EPHA8 in the developing midbrain. May be involved in regulation of myeloid differentiation. Can bind to the DNA sequence 5'-TGACAG-3'in the activator ACT sequence of the D(1A) dopamine receptor (DRD1) promoter and activate DRD1 transcription; isoform 5 cannot activate DRD1 transcription. The chain is Homeobox protein Meis2 (MEIS2) from Homo sapiens (Human).